The sequence spans 206 residues: MVNTPLAHDLLWGMTPAQLPADAPQWAIDSLAAGQPVVVRRALSEDGCVAVGVRGRFREQRLAAFMSVDSIACRVSPEALCQVESARDLPVMQALRQLRPVLDDCGWTWGVSGSVGFELASGFTAMHERSDLDLILRTPQLITRNQARKLVAYFEQAICRVDLQLQTPFGAVALREWAGNASRVLLKNAREACLVSDPWNPQEQAA.

Residues aspartate 131 and aspartate 133 contribute to the active site.

The protein belongs to the MdcG family.

The catalysed reaction is apo-[malonate decarboxylase ACP] + 2'-(5''-triphospho-alpha-D-ribosyl)-3'-dephospho-CoA = holo-[malonate decarboxylase ACP] + diphosphate. In terms of biological role, transfers 2'-(5-triphosphoribosyl)-3'-dephosphocoenzyme-A to the apo-[acyl-carrier-protein] of the malonate decarboxylase to yield holo-[acyl-carrier-protein]. This Pseudomonas fluorescens (strain Pf0-1) protein is Phosphoribosyl-dephospho-CoA transferase.